The following is a 477-amino-acid chain: Bifunctional protein HldE (477 aa).

The segment at 1–319 (MTVIFPNFSK…NIMNSHICTT (319 aa)) is ribokinase. 195–198 (NISE) is an ATP binding site. Asp-264 is an active-site residue. Residues 346-477 (MTNGVFDILH…NIINAIKRKN (132 aa)) are cytidylyltransferase.

This sequence in the N-terminal section; belongs to the carbohydrate kinase PfkB family. It in the C-terminal section; belongs to the cytidylyltransferase family. In terms of assembly, homodimer.

The catalysed reaction is D-glycero-beta-D-manno-heptose 7-phosphate + ATP = D-glycero-beta-D-manno-heptose 1,7-bisphosphate + ADP + H(+). The enzyme catalyses D-glycero-beta-D-manno-heptose 1-phosphate + ATP + H(+) = ADP-D-glycero-beta-D-manno-heptose + diphosphate. It functions in the pathway nucleotide-sugar biosynthesis; ADP-L-glycero-beta-D-manno-heptose biosynthesis; ADP-L-glycero-beta-D-manno-heptose from D-glycero-beta-D-manno-heptose 7-phosphate: step 1/4. The protein operates within nucleotide-sugar biosynthesis; ADP-L-glycero-beta-D-manno-heptose biosynthesis; ADP-L-glycero-beta-D-manno-heptose from D-glycero-beta-D-manno-heptose 7-phosphate: step 3/4. Functionally, catalyzes the phosphorylation of D-glycero-D-manno-heptose 7-phosphate at the C-1 position to selectively form D-glycero-beta-D-manno-heptose-1,7-bisphosphate. Its function is as follows. Catalyzes the ADP transfer from ATP to D-glycero-beta-D-manno-heptose 1-phosphate, yielding ADP-D-glycero-beta-D-manno-heptose. In Blochmanniella pennsylvanica (strain BPEN), this protein is Bifunctional protein HldE.